Reading from the N-terminus, the 168-residue chain is Nucleoside deoxyribosyltransferase (168 aa).

Glu-103 serves as the catalytic Nucleophile.

The protein belongs to the nucleoside deoxyribosyltransferase family.

The catalysed reaction is 2-deoxy-D-ribosyl-base(1) + base(2) = 2-deoxy-D-ribosyl-base(2) + base(1).. Its pathway is nucleotide metabolism; nucleotide salvage pathway. In terms of biological role, catalyzes the cleavage of the glycosidic bond of 2'-deoxyribonucleosides and the transfer of the deoxyribosyl moiety to an acceptor purine or pyrimidine base. In Limosilactobacillus fermentum (Lactobacillus fermentum), this protein is Nucleoside deoxyribosyltransferase (ntd).